The following is a 265-amino-acid chain: MAVGWFYLSVLALCSLGSMCILFTIYWMRYWHGGFAWDGSMLMFNWHPVLMVTGMVVLYSAASLVYRLPQSWVGPRLPWKSGHAAMHLLAFLLTVLGLHAVFEFHNHAKIPHLYSLHSWLGITTVFLFACQWFLGFSVFLLPWASMWLRSLLKPIHVFFGASILSLAIASVVSGINEKLFFSLKNGTKTYSNLPSEAVFANCAGMLVVVFGLLVLYILLASSWKRPEPGMQAEREPTRTRGRAGTPEVMLEGERGLAEPLLQKRS.

Residues 1-2 (MA) are Cytoplasmic-facing. The chain crosses the membrane as a helical span at residues 3–23 (VGWFYLSVLALCSLGSMCILF). Residues 12–219 (ALCSLGSMCI…FGLLVLYILL (208 aa)) form the Cytochrome b561 domain. The Lumenal segment spans residues 24–45 (TIYWMRYWHGGFAWDGSMLMFN). A helical membrane pass occupies residues 46–66 (WHPVLMVTGMVVLYSAASLVY). Heme b contacts are provided by histidine 47 and arginine 67. Residues 67-83 (RLPQSWVGPRLPWKSGH) are Cytoplasmic-facing. L-ascorbate contacts are provided by arginine 76 and lysine 80. Histidine 83 is a binding site for heme b. The chain crosses the membrane as a helical span at residues 84-104 (AAMHLLAFLLTVLGLHAVFEF). Residues 105 to 119 (HNHAKIPHLYSLHSW) lie on the Lumenal side of the membrane. Heme b contacts are provided by residues 112–115 (HLYS) and histidine 117. The helical transmembrane segment at 120–140 (LGITTVFLFACQWFLGFSVFL) threads the bilayer. At 141–154 (LPWASMWLRSLLKP) the chain is on the cytoplasmic side. Arginine 149 provides a ligand contact to L-ascorbate. Residues 155 to 175 (IHVFFGASILSLAIASVVSGI) traverse the membrane as a helical segment. Positions 156 and 177 each coordinate heme b. The Lumenal portion of the chain corresponds to 176-197 (NEKLFFSLKNGTKTYSNLPSEA). Asparagine 185 carries an N-linked (GlcNAc...) asparagine glycan. A helical membrane pass occupies residues 198–218 (VFANCAGMLVVVFGLLVLYIL). Over 219-265 (LASSWKRPEPGMQAEREPTRTRGRAGTPEVMLEGERGLAEPLLQKRS) the chain is Cytoplasmic. Residue lysine 224 participates in heme b binding. Positions 228–238 (PGMQAEREPTR) are enriched in basic and acidic residues. Residues 228-265 (PGMQAEREPTRTRGRAGTPEVMLEGERGLAEPLLQKRS) form a disordered region.

As to quaternary structure, homodimer. Heme b is required as a cofactor. Post-translationally, N-glycosylated.

It localises to the late endosome membrane. It is found in the lysosome membrane. It carries out the reaction Fe(3+)(out) + L-ascorbate(in) = monodehydro-L-ascorbate radical(in) + Fe(2+)(out) + H(+). Functionally, transmembrane reductase that uses ascorbate as an electron donor in the cytoplasm and transfers electrons across membranes to reduce iron cations Fe(3+) into Fe(2+) in the lumen of the late endosome and lysosome. Reduced iron can then be extruded from the late endosome and lysosome to the cytoplasm by divalent metal-specific transporters. It is therefore most probably involved in endosomal and lysosomal cellular iron homeostasis. In Bos taurus (Bovine), this protein is Lysosomal membrane ascorbate-dependent ferrireductase CYB561A3.